We begin with the raw amino-acid sequence, 871 residues long: Alanine--tRNA ligase (871 aa).

Zn(2+)-binding residues include His-561, His-565, Cys-665, and His-669.

Belongs to the class-II aminoacyl-tRNA synthetase family. Zn(2+) serves as cofactor.

The protein localises to the cytoplasm. It carries out the reaction tRNA(Ala) + L-alanine + ATP = L-alanyl-tRNA(Ala) + AMP + diphosphate. In terms of biological role, catalyzes the attachment of alanine to tRNA(Ala) in a two-step reaction: alanine is first activated by ATP to form Ala-AMP and then transferred to the acceptor end of tRNA(Ala). Also edits incorrectly charged Ser-tRNA(Ala) and Gly-tRNA(Ala) via its editing domain. This Dehalococcoides mccartyi (strain ATCC BAA-2100 / JCM 16839 / KCTC 5957 / BAV1) protein is Alanine--tRNA ligase.